Consider the following 213-residue polypeptide: 3-isopropylmalate dehydratase small subunit (213 aa).

This sequence belongs to the LeuD family. LeuD type 1 subfamily. As to quaternary structure, heterodimer of LeuC and LeuD.

The catalysed reaction is (2R,3S)-3-isopropylmalate = (2S)-2-isopropylmalate. It participates in amino-acid biosynthesis; L-leucine biosynthesis; L-leucine from 3-methyl-2-oxobutanoate: step 2/4. Its function is as follows. Catalyzes the isomerization between 2-isopropylmalate and 3-isopropylmalate, via the formation of 2-isopropylmaleate. In Pseudomonas syringae pv. tomato (strain ATCC BAA-871 / DC3000), this protein is 3-isopropylmalate dehydratase small subunit.